A 226-amino-acid chain; its full sequence is Small ribosomal subunit protein uS3 (226 aa).

The 69-residue stretch at 39–107 (VRNFIRKKLA…PVHINIEEIR (69 aa)) folds into the KH type-2 domain.

This sequence belongs to the universal ribosomal protein uS3 family. In terms of assembly, part of the 30S ribosomal subunit. Forms a tight complex with proteins S10 and S14.

Binds the lower part of the 30S subunit head. Binds mRNA in the 70S ribosome, positioning it for translation. The chain is Small ribosomal subunit protein uS3 from Alkalilimnicola ehrlichii (strain ATCC BAA-1101 / DSM 17681 / MLHE-1).